The primary structure comprises 165 residues: Nucleotide-binding protein A9601_05361 (165 aa).

This sequence belongs to the YajQ family.

Nucleotide-binding protein. The protein is Nucleotide-binding protein A9601_05361 of Prochlorococcus marinus (strain AS9601).